The following is a 78-amino-acid chain: UPF0349 protein ABC2936 (78 aa).

This sequence belongs to the UPF0349 family.

The sequence is that of UPF0349 protein ABC2936 from Shouchella clausii (strain KSM-K16) (Alkalihalobacillus clausii).